A 1215-amino-acid polypeptide reads, in one-letter code: Metabotropic glycine receptor (1215 aa).

The signal sequence occupies residues 1-23; that stretch reads MGAMAYPLLLCLLLAQLGLGAVG. The tract at residues 23-66 is disordered; that stretch reads GASRDPQGRPDSPRERTPKGKPHAQQPGRASASDSSAPWSRSTD. Over 24 to 417 the chain is Extracellular; it reads ASRDPQGRPD…CFVQEDKYLR (394 aa). The segment covering 28–40 has biased composition (basic and acidic residues); that stretch reads PQGRPDSPRERTP. The segment covering 52 to 64 has biased composition (low complexity); the sequence is ASASDSSAPWSRS. A cache-like region region spans residues 85 to 281; that stretch reads YLYTGDSHQL…CENGSYKPGW (197 aa). Asn98 and Asn143 each carry an N-linked (GlcNAc...) asparagine glycan. A disulfide bridge links Cys99 with Cys272. Ser172 and Arg173 together coordinate glycine. N-linked (GlcNAc...) asparagine glycosylation is present at Asn215. A glycine-binding site is contributed by Glu271. Asn274 is a glycosylation site (N-linked (GlcNAc...) asparagine). Asp307 contacts glycine. A glycan (N-linked (GlcNAc...) asparagine) is linked at Asn333. A helical membrane pass occupies residues 418 to 439; it reads LAIISFQALCMLLDFVSMLVVY. Topologically, residues 440–451 are cytoplasmic; it reads HFRKAKSIRASG. The chain crosses the membrane as a helical span at residues 452-474; the sequence is LILLETILFGSLLLYFPVVILYF. At 475-478 the chain is on the extracellular side; sequence EPST. The helical transmembrane segment at 479 to 501 threads the bilayer; it reads FRCILLRWARLLGFATVYGTVTL. An intrachain disulfide couples Cys481 to Cys573. Over 502–525 the chain is Cytoplasmic; sequence KLHRVLKVFLSRTAQRIPYMTGGR. Residues 526–547 form a helical membrane-spanning segment; that stretch reads VMRMLAVILLVVFWFLIGWTSS. The Extracellular portion of the chain corresponds to 548–576; it reads VCQNLEKQISLIGQGKTSDHLIFNMCLID. The helical transmembrane segment at 577–597 threads the bilayer; it reads RWDYMTAVAEFLFLLWGVYLC. Residues 598-611 lie on the Cytoplasmic side of the membrane; it reads YAVRTVPSAFHEPR. A helical transmembrane segment spans residues 612–633; that stretch reads YMAVAVHNELIISAIFHTIRFV. Over 634 to 642 the chain is Extracellular; sequence LASRLQSDW. The chain crosses the membrane as a helical span at residues 643 to 664; it reads MLMLYFAHTHLTVTVTIGLLLI. The Cytoplasmic segment spans residues 665–1215; the sequence is PKFSHSSNNP…KEEIWDSFKV (551 aa). Ser694, Ser705, and Ser708 each carry phosphoserine. The disordered stretch occupies residues 757–999; sequence RITEIPETVS…LNPGTTQMKD (243 aa). 2 stretches are compositionally biased toward basic and acidic residues: residues 769-781 and 819-828; these read CSKE…DHGT and STYDHVRDQT. Lys774 participates in a covalent cross-link: Glycyl lysine isopeptide (Lys-Gly) (interchain with G-Cter in ubiquitin). At Ser865 the chain carries Phosphoserine. Positions 925-943 are enriched in basic and acidic residues; the sequence is VEERTKSQKPLPKDKETNR. Ser946 bears the Phosphoserine mark. Over residues 979 to 998 the composition is skewed to polar residues; it reads QRVNPTTANSDLNPGTTQMK. Short sequence motifs (VCPWE motif) lie at residues 1006–1010 and 1071–1075; these read VCPWE and VCLWE. The residue at position 1080 (Ser1080) is a Phosphoserine. The disordered stretch occupies residues 1117–1164; it reads SEELPPKAVASKTENENLNQIGHQEKKTSSSEENVRGSYNSSNNFQQP. Basic and acidic residues predominate over residues 1139-1151; that stretch reads HQEKKTSSSEENV. Residues 1153 to 1164 are compositionally biased toward polar residues; that stretch reads GSYNSSNNFQQP. Residues 1171–1175 carry the VCPWE motif 3 motif; that stretch reads VCPWE.

It belongs to the G-protein coupled receptor 3 family. As to quaternary structure, homodimer. Associates with the RGS7-GNB5 complex, promoting its localization to the cell membrane and regulating its GTPase activator activity. Interacts (via VCPWE motifs) with GNAO1. Interacts with GPC4. Interacts with EGFLAM.

It is found in the cell membrane. Its subcellular location is the postsynaptic cell membrane. It localises to the presynaptic cell membrane. The protein localises to the nucleus. Functionally, metabotropic receptor for glycine that controls synapse formation and function in the brain. Acts as an atypical G-protein coupled receptor that recruits and regulates the RGS7-GNB5 complex instead of activating G proteins. In absence of glycine ligand, promotes the GTPase activator activity of RGS7, increasing the GTPase activity of G protein alpha subunits, thereby driving them into their inactive GDP-bound form. Glycine-binding changes the conformation of the intracellular surface, inhibiting the GTPase activator activity of the RGS7-GNB5 complex, promoting G protein alpha subunits into their active GTP-bound form and regulating cAMP levels. Also able to bind taurine, a compound closely related to glycine, but with a two-fold lower affinity. Glycine receptor-dependent regulation of cAMP controls key ion channels, kinases and neurotrophic factors involved in neuronal excitability and synaptic transmission. Plays a pivotal role in regulating mood and cognition via its ability to regulate neuronal excitability in L2/L3 pyramidal neurons of the prefrontal cortex. Also involved in spatial learning by regulating hippocampal CA1 neuronal excitability. Acts as a synaptic organizer in the hippocampus, required for proper mossy fiber-CA3 neurocircuitry establishment, structure and function: induces presynaptic differentiation in contacting axons via its interaction with GPC4. In addition to glycine, may also act as a receptor for osteocalcin (BGLAP) hormone: osteocalcin-binding initiates a signaling response that prevents neuronal apoptosis in the hippocampus and regulates the synthesis of neurotransmitters. The sequence is that of Metabotropic glycine receptor from Homo sapiens (Human).